The chain runs to 939 residues: Isoleucine--tRNA ligase (939 aa).

Residues 57-67 (PYANGHIHLGH) carry the 'HIGH' region motif. Glu-561 contacts L-isoleucyl-5'-AMP. Residues 602–606 (KMSKS) carry the 'KMSKS' region motif. Lys-605 lines the ATP pocket. 4 residues coordinate Zn(2+): Cys-903, Cys-906, Cys-923, and Cys-926.

Belongs to the class-I aminoacyl-tRNA synthetase family. IleS type 1 subfamily. In terms of assembly, monomer. The cofactor is Zn(2+).

Its subcellular location is the cytoplasm. It carries out the reaction tRNA(Ile) + L-isoleucine + ATP = L-isoleucyl-tRNA(Ile) + AMP + diphosphate. Its function is as follows. Catalyzes the attachment of isoleucine to tRNA(Ile). As IleRS can inadvertently accommodate and process structurally similar amino acids such as valine, to avoid such errors it has two additional distinct tRNA(Ile)-dependent editing activities. One activity is designated as 'pretransfer' editing and involves the hydrolysis of activated Val-AMP. The other activity is designated 'posttransfer' editing and involves deacylation of mischarged Val-tRNA(Ile). The chain is Isoleucine--tRNA ligase from Desulfotalea psychrophila (strain LSv54 / DSM 12343).